The chain runs to 229 residues: Nisin biosynthesis regulatory protein NisR (229 aa).

The region spanning 4–117 (KILIVDDDQE…QLVAKVEANI (114 aa)) is the Response regulatory domain. Residue Asp-53 is modified to 4-aspartylphosphate. Residues 132–229 (EIRRDLGPIT…VRGLGYQWHG (98 aa)) constitute a DNA-binding region (ompR/PhoB-type).

Phosphorylated by NisK.

Its function is as follows. Member of the two-component regulatory system NisK/NisR involved in the regulation of the biosynthesis of lantibiotic nisin. NisR may function as a regulatory protein. This chain is Nisin biosynthesis regulatory protein NisR (nisR), found in Lactococcus lactis subsp. lactis (Streptococcus lactis).